The sequence spans 505 residues: Cytochrome P450 monooxygenase FGM1 (505 aa).

The first 23 residues, 1-23 (MPLILSITSSGTVLVLLTLLSLA), serve as a signal peptide directing secretion. 2 N-linked (GlcNAc...) asparagine glycosylation sites follow: Asn-188 and Asn-351. Residue Cys-450 participates in heme binding.

The protein belongs to the cytochrome P450 family. Requires heme as cofactor.

It functions in the pathway secondary metabolite biosynthesis. Its function is as follows. Cytochrome P450 monooxygenase; part of the Fg3_54/C64 gene cluster that mediates the biosynthesis of the octapeptide fusaoctaxin A, a virulence factor that is required for cell-to-cell invasiveness of plant host. The 2 nonribosomal peptide synthetases NRPS9 and NRPS5 form an assembly line which likely utilizes GABA as a starter unit (loaded on the unique module M1 of NRPS9) and sequentially incorporates seven extender units composed of the residues L-Ala, L-allo-Ile, L-Ser, L-Val, L-Ser, L-Leu and L-Leu, respectively. During the process, each of the residues that are tethered on modules M3-M7 of NRPS5 containing an E domain can undergo an epimerization reaction to produce a D-configuration before the transpeptidation reaction occurs. The elongation of the peptidyl chain might be terminated by module M8-mediated L-Leu incorporation, followed by R domain-catalyzed 4 electron reduction to release the resulting octapeptide from the assembly line as an alcohol. Fusaoctaxin A is cleaved by the cluster specific ABC transporter FGM5 to the pentapeptide fusapentaxin A and the tripeptide fusatrixin A. The other enzymes from the cluster, FGM1, FGM2, FGM3 and FGM9 seem not to be involved in the biosynthesis of fusaoctaxin A and their functions have still to be determined. The protein is Cytochrome P450 monooxygenase FGM1 of Gibberella zeae (strain ATCC MYA-4620 / CBS 123657 / FGSC 9075 / NRRL 31084 / PH-1) (Wheat head blight fungus).